We begin with the raw amino-acid sequence, 330 residues long: Phosphate acyltransferase (330 aa).

It belongs to the PlsX family. As to quaternary structure, homodimer. Probably interacts with PlsY.

The protein localises to the cytoplasm. It catalyses the reaction a fatty acyl-[ACP] + phosphate = an acyl phosphate + holo-[ACP]. It functions in the pathway lipid metabolism; phospholipid metabolism. In terms of biological role, catalyzes the reversible formation of acyl-phosphate (acyl-PO(4)) from acyl-[acyl-carrier-protein] (acyl-ACP). This enzyme utilizes acyl-ACP as fatty acyl donor, but not acyl-CoA. The sequence is that of Phosphate acyltransferase from Lactobacillus delbrueckii subsp. bulgaricus (strain ATCC BAA-365 / Lb-18).